A 265-amino-acid chain; its full sequence is Hemin import ATP-binding protein HmuV (265 aa).

Residues 10–247 form the ABC transporter domain; the sequence is LVARHLRFQT…ETLAHWYRAD (238 aa). 42 to 49 is a binding site for ATP; it reads GPNGAGKS.

The protein belongs to the ABC transporter superfamily. Heme (hemin) importer (TC 3.A.1.14.5) family. In terms of assembly, the complex is composed of two ATP-binding proteins (HmuV), two transmembrane proteins (HmuU) and a solute-binding protein (HmuT).

The protein localises to the cell inner membrane. Functionally, part of the ABC transporter complex HmuTUV involved in hemin import. Responsible for energy coupling to the transport system. In Pectobacterium atrosepticum (strain SCRI 1043 / ATCC BAA-672) (Erwinia carotovora subsp. atroseptica), this protein is Hemin import ATP-binding protein HmuV.